Reading from the N-terminus, the 470-residue chain is Argininosuccinate lyase (470 aa).

The protein belongs to the lyase 1 family. Argininosuccinate lyase subfamily.

Its subcellular location is the cytoplasm. The catalysed reaction is 2-(N(omega)-L-arginino)succinate = fumarate + L-arginine. It functions in the pathway amino-acid biosynthesis; L-arginine biosynthesis; L-arginine from L-ornithine and carbamoyl phosphate: step 3/3. The protein is Argininosuccinate lyase of Mycobacterium sp. (strain MCS).